Here is a 137-residue protein sequence, read N- to C-terminus: Endoribonuclease YbeY (137 aa).

The Zn(2+) site is built by H107, H111, and D117.

The protein belongs to the endoribonuclease YbeY family. Requires Zn(2+) as cofactor.

Its subcellular location is the cytoplasm. Its function is as follows. Single strand-specific metallo-endoribonuclease involved in late-stage 70S ribosome quality control and in maturation of the 3' terminus of the 16S rRNA. This is Endoribonuclease YbeY from Bacteroides thetaiotaomicron (strain ATCC 29148 / DSM 2079 / JCM 5827 / CCUG 10774 / NCTC 10582 / VPI-5482 / E50).